We begin with the raw amino-acid sequence, 150 residues long: Large ribosomal subunit protein uL13 (150 aa).

The segment at 130-150 (EHPHAAQQPKTLQLDPAASAQ) is disordered.

This sequence belongs to the universal ribosomal protein uL13 family. As to quaternary structure, part of the 50S ribosomal subunit.

In terms of biological role, this protein is one of the early assembly proteins of the 50S ribosomal subunit, although it is not seen to bind rRNA by itself. It is important during the early stages of 50S assembly. The protein is Large ribosomal subunit protein uL13 of Synechococcus sp. (strain CC9311).